Reading from the N-terminus, the 291-residue chain is Undecaprenyl-diphosphatase (291 aa).

8 consecutive transmembrane segments (helical) span residues 1-21, 48-68, 102-122, 126-146, 162-182, 203-223, 231-251, and 267-287; these read MFIIELIKGIILGIVEGLTEF, SAFTFKIVIQLGSVFAAAWVF, LHVLVGMVPAGILGLLFDDFI, LFSVPTVMIGLFVGAIYMIIA, ISYFQAFVIGISQAVAMWPGF, SDFTFIMAVPIMLAASGLSLL, IADIPFYILGFLAAFTVGLIA, and FAIYRIVLVIFIAILYFGFGI.

The protein belongs to the UppP family.

Its subcellular location is the cell membrane. The enzyme catalyses di-trans,octa-cis-undecaprenyl diphosphate + H2O = di-trans,octa-cis-undecaprenyl phosphate + phosphate + H(+). Its function is as follows. Catalyzes the dephosphorylation of undecaprenyl diphosphate (UPP). Confers resistance to bacitracin. This Staphylococcus aureus (strain MRSA252) protein is Undecaprenyl-diphosphatase.